Here is a 231-residue protein sequence, read N- to C-terminus: Probable methylthioribulose-1-phosphate dehydratase (231 aa).

Residue Cys82 participates in substrate binding. Residues His100 and His102 each contribute to the Zn(2+) site. Glu123 (proton donor/acceptor) is an active-site residue. His181 contributes to the Zn(2+) binding site.

This sequence belongs to the aldolase class II family. MtnB subfamily. Zn(2+) is required as a cofactor.

It localises to the cytoplasm. It carries out the reaction 5-(methylsulfanyl)-D-ribulose 1-phosphate = 5-methylsulfanyl-2,3-dioxopentyl phosphate + H2O. Its pathway is amino-acid biosynthesis; L-methionine biosynthesis via salvage pathway; L-methionine from S-methyl-5-thio-alpha-D-ribose 1-phosphate: step 2/6. Its function is as follows. Catalyzes the dehydration of methylthioribulose-1-phosphate (MTRu-1-P) into 2,3-diketo-5-methylthiopentyl-1-phosphate (DK-MTP-1-P). The sequence is that of Probable methylthioribulose-1-phosphate dehydratase from Dictyostelium discoideum (Social amoeba).